Reading from the N-terminus, the 439-residue chain is ATP-dependent RNA helicase RhlB (439 aa).

The Q motif motif lies at 9-37 (QKFADLPLHPEVKQALAENGFEFCTPIQA). In terms of domain architecture, Helicase ATP-binding spans 40–219 (LPVLLQSKDI…YDHMNDPVKV (180 aa)). 53 to 60 (AQTGTGKT) contacts ATP. Residues 165–168 (DEAD) carry the DEAD box motif. The region spanning 243–390 (KMRLLLTLIE…VSNYDSSALL (148 aa)) is the Helicase C-terminal domain. The segment at 398-439 (KIPRKHPAGTRNLRERAGAGRPQGAHRSGGRPPRHDRTRRHS) is disordered. Positions 425–439 (SGGRPPRHDRTRRHS) are enriched in basic residues.

Belongs to the DEAD box helicase family. RhlB subfamily. In terms of assembly, component of the RNA degradosome, which is a multiprotein complex involved in RNA processing and mRNA degradation.

Its subcellular location is the cytoplasm. The catalysed reaction is ATP + H2O = ADP + phosphate + H(+). In terms of biological role, DEAD-box RNA helicase involved in RNA degradation. Has RNA-dependent ATPase activity and unwinds double-stranded RNA. The sequence is that of ATP-dependent RNA helicase RhlB from Shewanella putrefaciens (strain CN-32 / ATCC BAA-453).